Reading from the N-terminus, the 314-residue chain is PDZ domain-containing protein GIPC2 (314 aa).

The segment covering 1–12 has biased composition (basic residues); sequence MPLGLRGKKKAA. Residues 1–36 are disordered; that stretch reads MPLGLRGKKKAAKSKEAARLVEGERSSGSQGVPGPP. Residues 13–25 are compositionally biased toward basic and acidic residues; it reads KSKEAARLVEGER. In terms of domain architecture, PDZ spans 117 to 197; sequence EVNVYKSEDS…EELFTLQLIE (81 aa).

This sequence belongs to the GIPC family. Probably interacts with SEMA5A. Expressed in kidney and lung (at protein level).

It is found in the cytoplasm. The polypeptide is PDZ domain-containing protein GIPC2 (Gipc2) (Mus musculus (Mouse)).